Consider the following 145-residue polypeptide: Glutaconyl-CoA decarboxylase subunit gamma (145 aa).

Positions 52–82 are disordered; sequence APAPAAAPAAAPAPAAKPAAAAPAGSVTVSA. A compositionally biased stretch (low complexity) spans 57-75; that stretch reads AAPAAAPAPAAKPAAAAPA. The Biotinyl-binding domain maps to 77-145; it reads SVTVSAPMPG…VATGDVMVIL (69 aa). Residue K112 is modified to N6-biotinyllysine.

Heterooctamer consisting of two alpha, two beta, two gamma and two delta subunits. Biotin is required as a cofactor.

It carries out the reaction (2E)-glutaconyl-CoA + Na(+)(in) + H(+) = (2E)-butenoyl-CoA + Na(+)(out) + CO2. The protein operates within amino-acid degradation; L-glutamate degradation via hydroxyglutarate pathway; crotonoyl-CoA from L-glutamate: step 5/5. Functionally, biotin carrier subunit of the primary sodium pump glutaconyl-CoA decarboxylase (GCD). The chain is Glutaconyl-CoA decarboxylase subunit gamma (gcdC) from Acidaminococcus fermentans (strain ATCC 25085 / DSM 20731 / CCUG 9996 / CIP 106432 / VR4).